The chain runs to 149 residues: Nucleoside diphosphate kinase (149 aa).

K9, F57, R85, T91, R102, and N112 together coordinate ATP. The active-site Pros-phosphohistidine intermediate is the H115.

This sequence belongs to the NDK family. As to quaternary structure, homotetramer. The cofactor is Mg(2+).

Its subcellular location is the cytoplasm. The enzyme catalyses a 2'-deoxyribonucleoside 5'-diphosphate + ATP = a 2'-deoxyribonucleoside 5'-triphosphate + ADP. It carries out the reaction a ribonucleoside 5'-diphosphate + ATP = a ribonucleoside 5'-triphosphate + ADP. In terms of biological role, major role in the synthesis of nucleoside triphosphates other than ATP. The ATP gamma phosphate is transferred to the NDP beta phosphate via a ping-pong mechanism, using a phosphorylated active-site intermediate. This Herpetosiphon aurantiacus (strain ATCC 23779 / DSM 785 / 114-95) protein is Nucleoside diphosphate kinase.